A 365-amino-acid polypeptide reads, in one-letter code: Ribosomal RNA large subunit methyltransferase M (365 aa).

S-adenosyl-L-methionine-binding positions include Ser194, 227–230 (CPGG), Asp246, Asp266, and Asp284. Catalysis depends on Lys313, which acts as the Proton acceptor.

It belongs to the class I-like SAM-binding methyltransferase superfamily. RNA methyltransferase RlmE family. RlmM subfamily. In terms of assembly, monomer.

It is found in the cytoplasm. It carries out the reaction cytidine(2498) in 23S rRNA + S-adenosyl-L-methionine = 2'-O-methylcytidine(2498) in 23S rRNA + S-adenosyl-L-homocysteine + H(+). In terms of biological role, catalyzes the 2'-O-methylation at nucleotide C2498 in 23S rRNA. This chain is Ribosomal RNA large subunit methyltransferase M, found in Pasteurella multocida (strain Pm70).